The chain runs to 280 residues: Ribosomal RNA small subunit methyltransferase A (280 aa).

Positions 11, 13, 37, 57, 85, and 106 each coordinate S-adenosyl-L-methionine.

This sequence belongs to the class I-like SAM-binding methyltransferase superfamily. rRNA adenine N(6)-methyltransferase family. RsmA subfamily.

It localises to the cytoplasm. It carries out the reaction adenosine(1518)/adenosine(1519) in 16S rRNA + 4 S-adenosyl-L-methionine = N(6)-dimethyladenosine(1518)/N(6)-dimethyladenosine(1519) in 16S rRNA + 4 S-adenosyl-L-homocysteine + 4 H(+). In terms of biological role, specifically dimethylates two adjacent adenosines (A1518 and A1519) in the loop of a conserved hairpin near the 3'-end of 16S rRNA in the 30S particle. May play a critical role in biogenesis of 30S subunits. The sequence is that of Ribosomal RNA small subunit methyltransferase A from Campylobacter concisus (strain 13826).